The chain runs to 200 residues: Imidazoleglycerol-phosphate dehydratase (200 aa).

This sequence belongs to the imidazoleglycerol-phosphate dehydratase family.

It is found in the cytoplasm. It catalyses the reaction D-erythro-1-(imidazol-4-yl)glycerol 3-phosphate = 3-(imidazol-4-yl)-2-oxopropyl phosphate + H2O. The protein operates within amino-acid biosynthesis; L-histidine biosynthesis; L-histidine from 5-phospho-alpha-D-ribose 1-diphosphate: step 6/9. This is Imidazoleglycerol-phosphate dehydratase from Prosthecochloris aestuarii (strain DSM 271 / SK 413).